Here is a 295-residue protein sequence, read N- to C-terminus: Ribosomal RNA small subunit methyltransferase A (295 aa).

6 residues coordinate S-adenosyl-L-methionine: Asn25, Leu27, Gly52, Glu73, Asp98, and Asn120.

It belongs to the class I-like SAM-binding methyltransferase superfamily. rRNA adenine N(6)-methyltransferase family. RsmA subfamily.

The protein resides in the cytoplasm. The enzyme catalyses adenosine(1518)/adenosine(1519) in 16S rRNA + 4 S-adenosyl-L-methionine = N(6)-dimethyladenosine(1518)/N(6)-dimethyladenosine(1519) in 16S rRNA + 4 S-adenosyl-L-homocysteine + 4 H(+). Functionally, specifically dimethylates two adjacent adenosines (A1518 and A1519) in the loop of a conserved hairpin near the 3'-end of 16S rRNA in the 30S particle. May play a critical role in biogenesis of 30S subunits. The chain is Ribosomal RNA small subunit methyltransferase A from Desulfotalea psychrophila (strain LSv54 / DSM 12343).